The chain runs to 874 residues: Alanine--tRNA ligase (874 aa).

His-564, His-568, Cys-665, and His-669 together coordinate Zn(2+).

Belongs to the class-II aminoacyl-tRNA synthetase family. Requires Zn(2+) as cofactor.

It is found in the cytoplasm. It carries out the reaction tRNA(Ala) + L-alanine + ATP = L-alanyl-tRNA(Ala) + AMP + diphosphate. In terms of biological role, catalyzes the attachment of alanine to tRNA(Ala) in a two-step reaction: alanine is first activated by ATP to form Ala-AMP and then transferred to the acceptor end of tRNA(Ala). Also edits incorrectly charged Ser-tRNA(Ala) and Gly-tRNA(Ala) via its editing domain. The polypeptide is Alanine--tRNA ligase (Cupriavidus necator (strain ATCC 17699 / DSM 428 / KCTC 22496 / NCIMB 10442 / H16 / Stanier 337) (Ralstonia eutropha)).